A 757-amino-acid chain; its full sequence is Relaxin receptor 1 (757 aa).

At 1 to 409 (MTSGSVFFYI…ENLLASIIQR (409 aa)) the chain is on the extracellular side. Residues 26–63 (KCSLGYFPCGNITKCLPQLLHCNGVDDCGNQADEDNCG) form the LDL-receptor class A domain. Disulfide bonds link C27–C40, C34–C53, and C47–C62. A glycan (N-linked (GlcNAc...) asparagine) is linked at N36. L45, N48, V50, D52, D58, and E59 together coordinate Ca(2+). One can recognise an LRRNT domain in the interval 91–127 (ETPECLVGSVPVQCLCQGLELDCDETNLRAVPSVSSN). N127 is a glycosylation site (N-linked (GlcNAc...) asparagine). LRR repeat units follow at residues 151 to 172 (DLQKLYLQNNKITSISIYAFRG), 175 to 196 (SLTKLYLSHNRITFLKPGVFED), 199 to 220 (RLEWLIIEDNHLSRISPPTFYG), 223 to 244 (SLILLVLMNNVLTRLPDKPLCQ), 248 to 269 (RLHWLDLEGNHIHNLRNLTFIS), 272 to 293 (NLTVLVMRKNKINHLNENTFAP), 296 to 317 (KLDELDLGSNKIENLPPLIFKD), 320 to 341 (ELSQLNLSYNPIQKIQANQFDY), and 344 to 365 (KLKSLSLEGIEISNIQQRMFRP). 2 N-linked (GlcNAc...) asparagine glycosylation sites follow: N264 and N272. N-linked (GlcNAc...) asparagine glycosylation is present at N325. N368 carries an N-linked (GlcNAc...) asparagine glycan. A helical membrane pass occupies residues 410–430 (VFVWVVSAVTCFGNIFVICMR). At 431–443 (PYIRSENKLYAMS) the chain is on the cytoplasmic side. Residues 444–464 (IISLCCADCLMGIYLFVIGGF) traverse the membrane as a helical segment. Topologically, residues 465–486 (DLKFRGEYNKHAQLWMESTHCQ) are extracellular. Cysteines 485 and 563 form a disulfide. Residues 487–507 (LVGSLAILSTEVSVLLLTFLT) traverse the membrane as a helical segment. At 508–527 (LEKYICIVYPFRCVRPGKCR) the chain is on the cytoplasmic side. A helical transmembrane segment spans residues 528 to 548 (TITVLILIWITGFIVAFIPLS). Topologically, residues 549–577 (NKEFFKNYYGTNGVCFPLHSEDTESIGAQ) are extracellular. A helical membrane pass occupies residues 578-598 (IYSVAIFLGINLAAFIIIVFS). At 599-629 (YGSMFYSVHQSAITATEIRNQVKKEMILAKR) the chain is on the cytoplasmic side. The helical transmembrane segment at 630 to 650 (FFFIVFTDALCWIPIFVVKFL) threads the bilayer. S651 is a topological domain (extracellular). A helical transmembrane segment spans residues 652–672 (LLQVEIPGTITSWVVIFILPI). The Cytoplasmic portion of the chain corresponds to 673–757 (NSALNPILYT…SQSTRLNSYS (85 aa)).

This sequence belongs to the G-protein coupled receptor 1 family. Interacts with C1QTNF8. In terms of tissue distribution, expressed in the brain, kidney, testis, placenta, uterus, ovary, adrenal, prostate, skin and heart. Not detected in spleen.

It is found in the cell membrane. In terms of biological role, receptor for relaxins. The activity of this receptor is mediated by G proteins leading to stimulation of adenylate cyclase and an increase of cAMP. Binding of the ligand may also activate a tyrosine kinase pathway that inhibits the activity of a phosphodiesterase that degrades cAMP. The chain is Relaxin receptor 1 (RXFP1) from Homo sapiens (Human).